Reading from the N-terminus, the 260-residue chain is Snake venom serine protease KN14 (260 aa).

An N-terminal signal peptide occupies residues M1–A18. Positions Q19–L24 are excised as a propeptide. In terms of domain architecture, Peptidase S1 spans V25–A251. 5 disulfides stabilise this stretch: C31–C165, C100–C258, C144–C212, C176–C191, and C202–C227. H67 functions as the Charge relay system in the catalytic mechanism. An N-linked (GlcNAc...) asparagine glycan is attached at N105. D112 serves as the catalytic Charge relay system. The N-linked (GlcNAc...) asparagine glycan is linked to N172. S206 acts as the Charge relay system in catalysis. N213 and N255 each carry an N-linked (GlcNAc...) asparagine glycan.

It belongs to the peptidase S1 family. Snake venom subfamily. In terms of assembly, monomer. In terms of tissue distribution, expressed by the venom gland.

The protein localises to the secreted. In terms of biological role, snake venom serine protease that may act in the hemostasis system of the prey. The sequence is that of Snake venom serine protease KN14 from Trimeresurus stejnegeri (Chinese green tree viper).